The following is a 113-amino-acid chain: Neocarzinostatin (113 aa).

Intrachain disulfides connect C37–C47 and C88–C93.

This sequence belongs to the neocarzinostatin family.

NCS has antibiotic activity (for Gram-positive bacteria) and antitumor activity (for certain mouse tumors). NCS binds non-covalently to a chromophore which is the cytotoxic and mutagenic component of the antibiotic. The chromophore binds to DNA as a weak intercalator and causes single- and double-strand breaks. In Streptomyces malayensis, this protein is Neocarzinostatin (ncsA).